The chain runs to 562 residues: DNA ligase (562 aa).

Residue glutamate 250 participates in ATP binding. Catalysis depends on lysine 252, which acts as the N6-AMP-lysine intermediate. Positions 257, 272, 302, 342, 417, and 423 each coordinate ATP.

It belongs to the ATP-dependent DNA ligase family. Requires Mg(2+) as cofactor. Zn(2+) serves as cofactor.

The catalysed reaction is ATP + (deoxyribonucleotide)n-3'-hydroxyl + 5'-phospho-(deoxyribonucleotide)m = (deoxyribonucleotide)n+m + AMP + diphosphate.. The enzyme catalyses NAD(+) + (deoxyribonucleotide)n-3'-hydroxyl + 5'-phospho-(deoxyribonucleotide)m = (deoxyribonucleotide)n+m + AMP + beta-nicotinamide D-nucleotide.. In terms of biological role, DNA ligase that seals nicks in double-stranded DNA during DNA replication, DNA recombination and DNA repair. Can use both ATP and NAD(+), but NAD(+) may be a preferred nucleotide cofactor. In Thermococcus onnurineus (strain NA1), this protein is DNA ligase.